A 251-amino-acid chain; its full sequence is Vitamin B12 import ATP-binding protein BtuD (251 aa).

Residues 2 to 236 form the ABC transporter domain; the sequence is IRVNSLQVDS…EVLQSVFGTS (235 aa). 30–37 lines the ATP pocket; it reads GPNGCGKS.

This sequence belongs to the ABC transporter superfamily. Vitamin B12 importer (TC 3.A.1.13.1) family. In terms of assembly, the complex is composed of two ATP-binding proteins (BtuD), two transmembrane proteins (BtuC) and a solute-binding protein (BtuF).

Its subcellular location is the cell inner membrane. The enzyme catalyses an R-cob(III)alamin(out) + ATP + H2O = an R-cob(III)alamin(in) + ADP + phosphate + H(+). Functionally, part of the ABC transporter complex BtuCDF involved in vitamin B12 import. Responsible for energy coupling to the transport system. The protein is Vitamin B12 import ATP-binding protein BtuD of Vibrio cholerae serotype O1 (strain ATCC 39315 / El Tor Inaba N16961).